Consider the following 76-residue polypeptide: uncharacterized protein (76 aa).

The region spanning Val-15–Leu-69 is the HTH cro/C1-type domain. The H-T-H motif DNA-binding region spans Gln-26–Ala-45.

This is an uncharacterized protein from Sinorhizobium fredii (strain NBRC 101917 / NGR234).